Reading from the N-terminus, the 57-residue chain is MSGTTVLLLTCLFLVTMATSDCDLYDDSCTGTEICCTPPGDYQGNCMEGEDCPSGGR.

The first 18 residues, 1 to 18 (MSGTTVLLLTCLFLVTMA), serve as a signal peptide directing secretion. Intrachain disulfides connect C22-C36, C29-C46, and C35-C52.

In terms of tissue distribution, expressed by the venom duct.

It is found in the secreted. Probable neurotoxin. The polypeptide is Conotoxin Cal6.39 (Californiconus californicus (California cone)).